We begin with the raw amino-acid sequence, 862 residues long: Axin-1 (862 aa).

The disordered stretch occupies residues 1 to 78; that stretch reads MNIQEQGFPL…GYEPEGSASP (78 aa). The Tankyrase-binding motif signature appears at 20-29; that stretch reads APRPPVPGEE. A phosphoserine; by CK1 mark is found at Ser75 and Ser77. The 124-residue stretch at 88-211 folds into the RGS domain; the sequence is SLHSLLDDQD…LKSDIYLEYT (124 aa). The segment at 209–338 is interaction with TP53; that stretch reads EYTRTGSESP…DADTLSLTDS (130 aa). 2 disordered regions span residues 215–289 and 316–344; these read SESP…YSEG and TSANDSEQQSLSSDADTLSLTDSSVDGIP. Ser217 bears the Phosphoserine; by CK1 mark. Residues 242 to 258 show a composition bias toward acidic residues; it reads NEDEEWKCDQDMDEDDG. Over residues 325-339 the composition is skewed to low complexity; that stretch reads SLSSDADTLSLTDSS. The segment at 348 to 433 is interaction with GSK3B; that stretch reads IRKQHRREMQ…DGDPSSGPPG (86 aa). The tract at residues 353-411 is interaction with SIAH1 and SIAH2; it reads RREMQESVQVNGRVPLPHIPRTYRVPKEVRVEPQKFAEELIHRLEAVQRTREAEEKLEE. The segment at 413–441 is disordered; sequence LKRVRMEEEGEDGDPSSGPPGPCHKLPPA. Over residues 429-441 the composition is skewed to pro residues; sequence SGPPGPCHKLPPA. Positions 434–502 are interaction with CTNNB1; that stretch reads PCHKLPPAPA…SPDSGHVAKM (69 aa). Ser469 is subject to Phosphoserine; by CK1. Positions 480–500 are disordered; it reads RTPGRQSPGPGHRSPDSGHVA. The residue at position 481 (Thr481) is a Phosphothreonine; by GSK3-beta. Residues Ser486, Ser493, and Ser511 each carry the phosphoserine modification. The interval 507–757 is interaction with RNF111; the sequence is GGAASGHGKH…PVLHVVPAVS (251 aa). Residues 531-544 show a composition bias toward basic residues; that stretch reads HHRHVHHHVHHSTA. Disordered stretches follow at residues 531 to 629 and 641 to 679; these read HHRH…AEKN and KEISRHRRTGHGSSGTRKPQPHENSRPLSLEHPWAGPQL. The segment covering 545–556 has biased composition (basic and acidic residues); it reads RPKEQVEAEATR. The tract at residues 575–789 is interaction with PPP2CA; it reads SRGYSESVGA…CDSIVVAYYF (215 aa). Ser581 carries the phosphoserine modification. Residues 677-752 form an interaction with HIPK2 region; it reads PQLRTSVQPS…RPACAPVLHV (76 aa). The 83-residue stretch at 780 to 862 folds into the DIX domain; sequence CDSIVVAYYF…KIIGKVEKVD (83 aa). Residues Lys857 and Lys860 each participate in a glycyl lysine isopeptide (Lys-Gly) (interchain with G-Cter in SUMO) cross-link.

As to quaternary structure, homodimer. Interacts with ZBED3; the interaction is direct, enhanced by protein kinase GSK3B and casein kinase CSNK1E activities and decreases GSK3B-induced beta-catenin serine and threonine phosphorylations. Component of the beta-catenin destruction complex, containing at least, CTNNB1, an axin and GSK3B, that regulates CTNNB1 protein levels through phosphorylation and ubiquitination. Interacts with CTNNB1 (via the armadillo repeats 2-7). Interacts with GSK3B; the interaction hyperphosphorylates CTNNB1 leading to its ubiquitination and destruction. Component of the AXIN1-HIPK2-TP53 complex. Interacts directly in the complex with TP53 and HIPK2. Interacts with DAXX; the interaction stimulates the interaction of DAXX with TP53, stimulates 'Ser-46' phosphorylation of TP53 and induces cell death on UV irradiation. Also binds APC, SMAD6, SMAD7 and RNF111. Interacts with DIXDC1; prevents interaction with MAP3K1. Interacts with MAP3K4. Interacts with ANKRD6 and AIDA. Interacts with MDFI; the interaction decreases AXIN1-mediated JUN N-terminal kinase (JNK) activation. Interacts with MDFIC; the interaction inhibits beta-cateninin-mediated signaling and AXIN1-mediated JUN N-terminal kinase (JNK) activation. Interacts with LRP5 (via its phosphorylated PPPSP motifs); the interaction is stimulated by WNT1 and GSK3B and activates beta-catenin signaling. Interacts (via the C-terminal) with PPP1CA; the interaction dephosphorylates AXIN1 and regulates interaction with GSK3B. Interacts with PPP2CA; the interaction dephosphorylates AXIN1. Interacts with MACF1. Found in a complex composed of MACF1, APC, AXIN1, CTNNB1 and GSK3B. Interacts with TNKS. Interacts with DAB2; the interaction is mutually exclusive with the AXIN1:PPP1CA interaction. Interacts with WDR26. Interacts with GID8. Interacts with SIAH1 and SIAH2; both probably catalyze AXIN1 ubiquitination and subsequent proteasome-mediated ubiquitin-dependent degradation. Interaction with GSK3B and AXIN1 is competitive. Phosphorylation and dephosphorylation of AXIN1 regulates assembly and function of the beta-catenin complex. Phosphorylated by CK1 and GSK3B. Dephosphorylated by PPP1CA and PPP2CA. Phosphorylation by CK1 enhances binding of GSK3B to AXIN1. In terms of processing, ADP-ribosylated by tankyrase TNKS and TNKS2. Poly-ADP-ribosylated protein is recognized by RNF146, followed by ubiquitination at 'Lys-48' and subsequent activation of the Wnt signaling pathway. Post-translationally, ubiquitinated by RNF146 when poly-ADP-ribosylated, leading to its degradation and subsequent activation of the Wnt signaling pathway. Sumoylation at Lys-857 and Lys-860 prevents ubiquitination and degradation. Sumoylation is required for AXIN1-mediated JNK activation. Deubiquitinated by USP34, deubiquitinated downstream of beta-catenin stabilization step: deubiquitination is important for nuclear accumulation during Wnt signaling to positively regulate beta-catenin (CTNBB1)-mediated transcription. Ubiquitination by SIAH1 and SIAH2 induces its proteasomal degradation as part of the activation of the Wnt signaling pathway. Ubiquitously expressed.

The protein localises to the cytoplasm. The protein resides in the nucleus. It localises to the membrane. Its subcellular location is the cell membrane. Functionally, component of the beta-catenin destruction complex required for regulating CTNNB1 levels through phosphorylation and ubiquitination, and modulating Wnt-signaling. Controls dorsoventral patterning via two opposing effects; down-regulates CTNNB1 to inhibit the Wnt signaling pathway and ventralize embryos, but also dorsalizes embryos by activating a Wnt-independent JNK signaling pathway. In Wnt signaling, probably facilitates the phosphorylation of CTNNB1 and APC by GSK3B. Likely to function as a tumor suppressor. Enhances TGF-beta signaling by recruiting the RNF111 E3 ubiquitin ligase and promoting the degradation of inhibitory SMAD7. Also a component of the AXIN1-HIPK2-TP53 complex which controls cell growth, apoptosis and development. Facilitates the phosphorylation of TP53 by HIPK2 upon ultraviolet irradiation. The sequence is that of Axin-1 (AXIN1) from Homo sapiens (Human).